A 90-amino-acid chain; its full sequence is Hemoglobin subunit alpha-1 (90 aa).

The 90-residue stretch at valine 1 to lysine 90 folds into the Globin domain.

The protein belongs to the globin family. As to quaternary structure, heterotetramer of two alpha chains and two beta chains. Red blood cells.

Functionally, involved in oxygen transport from the lung to the various peripheral tissues. In Saara hardwickii (Indian spiny-tailed lizard), this protein is Hemoglobin subunit alpha-1.